We begin with the raw amino-acid sequence, 178 residues long: Inner membrane-spanning protein YciB (178 aa).

5 helical membrane passes run 22–42 (IFVA…VSWL), 50–70 (MALF…ALHN), 76–96 (WKVT…HWFM), 121–141 (IAWA…AFWL), and 149–169 (FKVF…GIYI).

Belongs to the YciB family.

It is found in the cell inner membrane. Functionally, plays a role in cell envelope biogenesis, maintenance of cell envelope integrity and membrane homeostasis. The protein is Inner membrane-spanning protein YciB of Erwinia tasmaniensis (strain DSM 17950 / CFBP 7177 / CIP 109463 / NCPPB 4357 / Et1/99).